Here is a 526-residue protein sequence, read N- to C-terminus: D-arabinono-1,4-lactone oxidase (526 aa).

The region spanning 19 to 193 (YSAKPERYFQ…VSATIRVVPG (175 aa)) is the FAD-binding PCMH-type domain. Histidine 56 is modified (pros-8alpha-FAD histidine).

The protein belongs to the oxygen-dependent FAD-linked oxidoreductase family. Monomer. FAD serves as cofactor. The N-terminus is blocked.

The protein localises to the mitochondrion membrane. The catalysed reaction is D-arabinono-1,4-lactone + O2 = dehydro-D-arabinono-1,4-lactone + H2O2 + H(+). Its pathway is cofactor biosynthesis; D-erythroascorbate biosynthesis; dehydro-D-arabinono-1,4-lactone from D-arabinose: step 2/2. In terms of biological role, can oxidize L-gulono-1,4-lactone as well as D-arabinono-1,4-lactone and L-galactono-1,4-lactone. This is D-arabinono-1,4-lactone oxidase (ALO1) from Saccharomyces cerevisiae (strain ATCC 204508 / S288c) (Baker's yeast).